The sequence spans 199 residues: ATP-dependent Clp protease proteolytic subunit (199 aa).

Catalysis depends on S98, which acts as the Nucleophile. Residue H123 is part of the active site.

This sequence belongs to the peptidase S14 family. Fourteen ClpP subunits assemble into 2 heptameric rings which stack back to back to give a disk-like structure with a central cavity, resembling the structure of eukaryotic proteasomes.

It localises to the cytoplasm. It catalyses the reaction Hydrolysis of proteins to small peptides in the presence of ATP and magnesium. alpha-casein is the usual test substrate. In the absence of ATP, only oligopeptides shorter than five residues are hydrolyzed (such as succinyl-Leu-Tyr-|-NHMec, and Leu-Tyr-Leu-|-Tyr-Trp, in which cleavage of the -Tyr-|-Leu- and -Tyr-|-Trp bonds also occurs).. Cleaves peptides in various proteins in a process that requires ATP hydrolysis. Has a chymotrypsin-like activity. Plays a major role in the degradation of misfolded proteins. In Clostridium botulinum (strain Alaska E43 / Type E3), this protein is ATP-dependent Clp protease proteolytic subunit.